Here is a 260-residue protein sequence, read N- to C-terminus: Acetylglutamate kinase (260 aa).

Substrate-binding positions include 46 to 47 (GG), arginine 68, and asparagine 160.

The protein belongs to the acetylglutamate kinase family. ArgB subfamily.

It is found in the cytoplasm. The catalysed reaction is N-acetyl-L-glutamate + ATP = N-acetyl-L-glutamyl 5-phosphate + ADP. Its pathway is amino-acid biosynthesis; L-arginine biosynthesis; N(2)-acetyl-L-ornithine from L-glutamate: step 2/4. In terms of biological role, catalyzes the ATP-dependent phosphorylation of N-acetyl-L-glutamate. The chain is Acetylglutamate kinase from Shewanella oneidensis (strain ATCC 700550 / JCM 31522 / CIP 106686 / LMG 19005 / NCIMB 14063 / MR-1).